The sequence spans 148 residues: ASCH domain-containing ribonuclease (148 aa).

The 58-residue stretch at 13–70 (SLWPEFAKAIVSGKKTVEFRRRIPLPALSARIWIYATRPVKSVIGFAYLEAIVQGDVN) folds into the ASCH domain.

Requires Mn(2+) as cofactor. The cofactor is Ni(2+).

Its function is as follows. Shows sequence-specific endoribonuclease activity towards single-stranded RNA (ssRNA), with a preference for the bond between pyrimidine and adenine nucleotides. May also have 5'-exonuclease activity. The sequence is that of ASCH domain-containing ribonuclease from Zymomonas mobilis subsp. mobilis (strain ATCC 10988 / DSM 424 / LMG 404 / NCIMB 8938 / NRRL B-806 / ZM1).